A 323-amino-acid polypeptide reads, in one-letter code: Ribose-phosphate pyrophosphokinase (323 aa).

ATP is bound by residues Asp-38 to Glu-40 and Arg-96 to Gln-97. Residues His-130 and Asp-170 each contribute to the Mg(2+) site. Lys-193 is a catalytic residue. Residues Arg-195, Asp-219, and Asp-223 to Thr-227 each bind D-ribose 5-phosphate.

The protein belongs to the ribose-phosphate pyrophosphokinase family. Class I subfamily. In terms of assembly, homohexamer. It depends on Mg(2+) as a cofactor.

The protein resides in the cytoplasm. It catalyses the reaction D-ribose 5-phosphate + ATP = 5-phospho-alpha-D-ribose 1-diphosphate + AMP + H(+). It functions in the pathway metabolic intermediate biosynthesis; 5-phospho-alpha-D-ribose 1-diphosphate biosynthesis; 5-phospho-alpha-D-ribose 1-diphosphate from D-ribose 5-phosphate (route I): step 1/1. In terms of biological role, involved in the biosynthesis of the central metabolite phospho-alpha-D-ribosyl-1-pyrophosphate (PRPP) via the transfer of pyrophosphoryl group from ATP to 1-hydroxyl of ribose-5-phosphate (Rib-5-P). This Chlorobaculum tepidum (strain ATCC 49652 / DSM 12025 / NBRC 103806 / TLS) (Chlorobium tepidum) protein is Ribose-phosphate pyrophosphokinase.